The sequence spans 1107 residues: Rho GTPase-activating protein 39 (1107 aa).

Residues Met1–Ile21 form a disordered region. Ser2 is modified (N-acetylserine). Positions Tyr7–Pro19 are enriched in basic and acidic residues. WW domains lie at Ser25–Gly58 and Arg63–Asn97. A compositionally biased stretch (polar residues) spans Gln111–Asn122. 4 disordered regions span residues Gln111 to Val173, Pro218 to Arg267, Ser282 to Glu311, and Met326 to Thr370. The span at Ser123–Ser136 shows a compositional bias: low complexity. The span at Ser242–Val254 shows a compositional bias: polar residues. A Phosphoserine modification is found at Ser282. Composition is skewed to polar residues over residues Glu331 to Arg343 and Leu353 to Arg369. A phosphoserine mark is found at Ser380, Ser384, Ser402, and Ser403. Disordered stretches follow at residues Pro404–Pro429, Ser441–Leu529, and Met563–Pro585. Positions Ser470–Ser484 are enriched in polar residues. Residues Ser597, Ser683, Ser708, and Ser719 each carry the phosphoserine modification. A MyTH4 domain is found at Trp715–Ala867. The Rho-GAP domain occupies Ser914–Phe1102.

The protein localises to the nucleus. The polypeptide is Rho GTPase-activating protein 39 (Arhgap39) (Mus musculus (Mouse)).